The sequence spans 557 residues: MPSDIEIARAATLKPIAQVAEKLGIPDEALHNYGKHIAKIDHDFIASLEGKPEGKLVLVTAISPTPAGEGKTTTTVGLGDALNRIGKRAVMCLREPSLGPCFGMKGGAAGGGKAQVVPMEQINLHFTGDFHAITSAHSLAAALIDNHIYWANELNIDVRRIHWRRVVDMNDRALRAINQSLGGVANGFPREDGFDITVASEVMAVFCLAKNLADLEERLGRIVIAETRDRKPVTLADVKATGAMTVLLKDALQPNLVQTLEGNPALIHGGPFANIAHGCNSVIATRTGLRLADYTVTEAGFGADLGAEKFIDIKCRQTGLKPSAVVIVATIRALKMHGGVNKKDLQAENLDALEKGFANLERHVNNVRSFGLPVVVGVNHFFQDTDAEHARLKELCRDRLQVEAITCKHWAEGGAGAEALAQAVVKLAEGEQKPLTFAYETETKITDKIKAIATKLYGAADIQIESKAATKLAGFEKDGYGKLPVCMAKTQYSFSTDPTLMGAPSGHLVSVRDVRLSAGAGFVVVICGEIMTMPGLPKVPAADTIRLDANGQIDGLF.

65-72 contacts ATP; that stretch reads TPAGEGKT.

Belongs to the formate--tetrahydrofolate ligase family.

It carries out the reaction (6S)-5,6,7,8-tetrahydrofolate + formate + ATP = (6R)-10-formyltetrahydrofolate + ADP + phosphate. The protein operates within one-carbon metabolism; tetrahydrofolate interconversion. The protein is Formate--tetrahydrofolate ligase of Methylorubrum extorquens (strain PA1) (Methylobacterium extorquens).